Reading from the N-terminus, the 478-residue chain is Solute carrier family 49 member 4 (478 aa).

The interval methionine 1 to alanine 27 is disordered. At methionine 1–arginine 51 the chain is on the cytoplasmic side. Residues leucine 15 to leucine 16 carry the Di-leucine motif; mediates lysosomal localization motif. The helical transmembrane segment at tryptophan 52–tryptophan 72 threads the bilayer. At glycine 73–aspartate 89 the chain is on the lumenal side. Residues isoleucine 90–leucine 110 form a helical membrane-spanning segment. The Cytoplasmic portion of the chain corresponds to leucine 111–arginine 117. Residues valine 118–valine 138 traverse the membrane as a helical segment. Over serine 139 to glutamine 152 the chain is Lumenal. Residues isoleucine 153–tryptophan 173 form a helical membrane-spanning segment. The Cytoplasmic portion of the chain corresponds to phenylalanine 174–alanine 184. The chain crosses the membrane as a helical span at residues isoleucine 185–valine 205. At proline 206–glutamate 229 the chain is on the lumenal side. A glycan (N-linked (GlcNAc...) asparagine) is linked at asparagine 209. The helical transmembrane segment at threonine 230–phenylalanine 250 threads the bilayer. The Cytoplasmic portion of the chain corresponds to proline 251 to arginine 281. A helical transmembrane segment spans residues phenylalanine 282–valine 302. Over leucine 303–glutamine 314 the chain is Lumenal. A helical transmembrane segment spans residues valine 315 to methionine 335. The Cytoplasmic segment spans residues alanine 336 to lysine 347. Residues leucine 348–cysteine 368 form a helical membrane-spanning segment. Residues leucine 369 to alanine 384 are Lumenal-facing. The chain crosses the membrane as a helical span at residues serine 385–valine 405. The Cytoplasmic segment spans residues glutamate 406–glycine 414. The chain crosses the membrane as a helical span at residues isoleucine 415–valine 435. Residues threonine 436–leucine 442 lie on the Lumenal side of the membrane. The helical transmembrane segment at serine 443–phenylalanine 463 threads the bilayer. The Cytoplasmic segment spans residues arginine 464–valine 478.

It belongs to the major facilitator superfamily. Cleaved in lysosomes by cathepsin L between Leu-214 and Ala-261, generating a N-glycosylated N-terminal and a non-glycosylated C-terminal fragment.

The protein resides in the lysosome membrane. It catalyses the reaction pyridoxine(out) + n H(+)(out) = pyridoxine(in) + n H(+)(in). In terms of biological role, mediates H(+)-dependent pyridoxine transport. The polypeptide is Solute carrier family 49 member 4 (Slc49a4) (Mus musculus (Mouse)).